Consider the following 185-residue polypeptide: Ribosome-recycling factor (185 aa).

This sequence belongs to the RRF family.

Its subcellular location is the cytoplasm. Responsible for the release of ribosomes from messenger RNA at the termination of protein biosynthesis. May increase the efficiency of translation by recycling ribosomes from one round of translation to another. This chain is Ribosome-recycling factor, found in Xanthomonas oryzae pv. oryzae (strain MAFF 311018).